Here is a 103-residue protein sequence, read N- to C-terminus: Protein RALF-like 18 (103 aa).

Positions 1–32 (MMNNMKLLIIAVMIISAALLPALVVGSRPVKC) are cleaved as a signal peptide. The propeptide at 33 to 58 (DNCMDGGEKEEIMKMSSGVDVSHRIL) is removed in mature form. The cysteines at positions 92 and 98 are disulfide-linked.

Belongs to the plant rapid alkalinization factor (RALF) family. Proteolytically cleaved, probably by S1P, a subtilisin-like serine protease (subtilase).

The protein localises to the secreted. Its function is as follows. Cell signaling peptide that may regulate plant stress, growth, and development. Mediates a rapid alkalinization of extracellular space by mediating a transient increase in the cytoplasmic Ca(2+) concentration leading to a calcium-dependent signaling events through a cell surface receptor and a concomitant activation of some intracellular mitogen-activated protein kinases. The polypeptide is Protein RALF-like 18 (RALFL18) (Arabidopsis thaliana (Mouse-ear cress)).